Here is a 173-residue protein sequence, read N- to C-terminus: ATP synthase subunit b (173 aa).

The chain crosses the membrane as a helical span at residues 15–35; that stretch reads GVEWGTVIVQVLTFIVLLALL.

This sequence belongs to the ATPase B chain family. As to quaternary structure, F-type ATPases have 2 components, F(1) - the catalytic core - and F(0) - the membrane proton channel. F(1) has five subunits: alpha(3), beta(3), gamma(1), delta(1), epsilon(1). F(0) has three main subunits: a(1), b(2) and c(10-14). The alpha and beta chains form an alternating ring which encloses part of the gamma chain. F(1) is attached to F(0) by a central stalk formed by the gamma and epsilon chains, while a peripheral stalk is formed by the delta and b chains.

The protein resides in the cell membrane. In terms of biological role, f(1)F(0) ATP synthase produces ATP from ADP in the presence of a proton or sodium gradient. F-type ATPases consist of two structural domains, F(1) containing the extramembraneous catalytic core and F(0) containing the membrane proton channel, linked together by a central stalk and a peripheral stalk. During catalysis, ATP synthesis in the catalytic domain of F(1) is coupled via a rotary mechanism of the central stalk subunits to proton translocation. Component of the F(0) channel, it forms part of the peripheral stalk, linking F(1) to F(0). This chain is ATP synthase subunit b, found in Staphylococcus aureus (strain MRSA252).